A 1009-amino-acid polypeptide reads, in one-letter code: Protein-tyrosine kinase 2-beta (1009 aa).

In terms of domain architecture, FERM spans 39 to 359; sequence RILKVCFYSN…GYCRLQGEHK (321 aa). A phosphoserine mark is found at serine 361, serine 375, and serine 399. Tyrosine 402 is modified (phosphotyrosine; by autocatalysis). Positions 425–683 constitute a Protein kinase domain; that stretch reads VVLNRILGEG…ELVCSLSDIY (259 aa). ATP is bound by residues 431–439, lysine 457, and 503–509; these read LGEGFFGEV and ELYPYGE. Aspartate 549 functions as the Proton acceptor in the catalytic mechanism. Tyrosine 579, tyrosine 580, and tyrosine 722 each carry phosphotyrosine. The disordered stretch occupies residues 702–725; that stretch reads PKILEPTAFQEPPPKPSRPKYKHP. A Phosphoserine modification is found at serine 762. Phosphothreonine is present on threonine 765. Positions 801 to 1009 are interaction with TGFB1I1; the sequence is KIKMRQVLDR…VANLAHPPAE (209 aa). A Phosphotyrosine modification is found at tyrosine 834. Serine 839 is subject to Phosphoserine. Position 842 is a phosphothreonine (threonine 842). Position 849 is a phosphotyrosine (tyrosine 849). Serine 866 carries the phosphoserine modification. Residues 868 to 1009 form a focal adhesion targeting (FAT) region; it reads QPTANLDRTD…VANLAHPPAE (142 aa). Tyrosine 881 is subject to Phosphotyrosine.

The protein belongs to the protein kinase superfamily. Tyr protein kinase family. FAK subfamily. As to quaternary structure, homodimer, or homooligomer. Interacts with NPHP1, ASAP1, ASAP2, ARHGAP26, SKAP2 and TGFB1I1. The Tyr-402 phosphorylated form interacts with SRC (via SH2 domain) and SRC family members. Forms a signaling complex with EPHA1, LCK and phosphatidylinositol 3-kinase; upon activation by EFNA1. Interacts with GRB2 (via SH2 domain). Interacts with P53/TP53 and MDM2. Interacts with MYLK. Interacts with BCAR1. Interacts with RB1CC1. Interacts with RHOU. Interacts with VAV1. Interacts with PDPK1. Interacts with LPXN and PTPN12. Interacts with SIRPA and SH2D3C. Interacts (hypophosphorylated) with PXN. Interacts with ARHGAP10. Interacts with KCNA2. Phosphorylated on tyrosine residues in response to various stimuli that elevate the intracellular calcium concentration; this activation is indirect and may be mediated by production of reactive oxygen species (ROS). Tyr-402 is the major autophosphorylation site, but other kinases can also phosphorylate Tyr-402. Autophosphorylation occurs in trans, i.e. one subunit of the dimeric receptor phosphorylates tyrosine residues on the other subunit. Phosphorylation at Tyr-402 promotes interaction with SRC and SRC family members, leading to phosphorylation at Tyr-579; Tyr-580 and Tyr-881. Phosphorylation at Tyr-881 is important for interaction with GRB2. Phosphorylated on tyrosine residues upon activation of FGR and PKC. Recruitment by NPHP1 to cell matrix adhesions initiates Tyr-402 phosphorylation. In monocytes, adherence to substrata is required for tyrosine phosphorylation and kinase activation. Angiotensin II, thapsigargin and L-alpha-lysophosphatidic acid (LPA) also induce autophosphorylation and increase kinase activity. Phosphorylation by MYLK promotes ITGB2 activation and is thus essential to trigger neutrophil transmigration during lung injury. Dephosphorylated by PTPN12. Highly expressed in pulmonary vein endothelial cells, lung and brain (at protein level). Isoform 1 is expressed at high levels in the brain (hippocampus, cerebral cortex and olfactory bulb) and poorly in the spleen and other tissues, whereas isoforms 2 and 3 are expressed in the spleen and brain (highest in cerebellum).

It localises to the cytoplasm. Its subcellular location is the perinuclear region. The protein localises to the cell membrane. It is found in the cell projection. The protein resides in the lamellipodium. It localises to the cell cortex. Its subcellular location is the nucleus. The protein localises to the cell junction. It is found in the focal adhesion. It catalyses the reaction L-tyrosyl-[protein] + ATP = O-phospho-L-tyrosyl-[protein] + ADP + H(+). Its activity is regulated as follows. Activated in response to stimuli that lead to increased intracellular Ca(2+) levels; this activation is indirect and may be mediated by calcium-mediated production of reactive oxygen species (ROS). Activated by autophosphorylation at Tyr-402; this creates a binding site for SRC family kinases and leads to phosphorylation at additional tyrosine residues. Phosphorylation at Tyr-402, Tyr-579 and Tyr-580 is required for optimal kinase activity. Functionally, non-receptor protein-tyrosine kinase that regulates reorganization of the actin cytoskeleton, cell polarization, cell migration, adhesion, spreading and bone remodeling. Plays a role in the regulation of the humoral immune response, and is required for normal levels of marginal B-cells in the spleen and normal migration of splenic B-cells. Required for normal macrophage polarization and migration towards sites of inflammation. Regulates cytoskeleton rearrangement and cell spreading in T-cells, and contributes to the regulation of T-cell responses. Promotes osteoclastic bone resorption; this requires both PTK2B/PYK2 and SRC. May inhibit differentiation and activity of osteoprogenitor cells. Functions in signaling downstream of integrin and collagen receptors, immune receptors, G-protein coupled receptors (GPCR), cytokine, chemokine and growth factor receptors, and mediates responses to cellular stress. Forms multisubunit signaling complexes with SRC and SRC family members upon activation; this leads to the phosphorylation of additional tyrosine residues, creating binding sites for scaffold proteins, effectors and substrates. Regulates numerous signaling pathways. Promotes activation of phosphatidylinositol 3-kinase and of the AKT1 signaling cascade. Promotes activation of NOS3. Regulates production of the cellular messenger cGMP. Promotes activation of the MAP kinase signaling cascade, including activation of MAPK1/ERK2, MAPK3/ERK1 and MAPK8/JNK1. Promotes activation of Rho family GTPases, such as RHOA and RAC1. Recruits the ubiquitin ligase MDM2 to P53/TP53 in the nucleus, and thereby regulates P53/TP53 activity, P53/TP53 ubiquitination and proteasomal degradation. Acts as a scaffold, binding to both PDPK1 and SRC, thereby allowing SRC to phosphorylate PDPK1 at 'Tyr-9, 'Tyr-373', and 'Tyr-376'. Promotes phosphorylation of NMDA receptors by SRC family members, and thereby contributes to the regulation of NMDA receptor ion channel activity and intracellular Ca(2+) levels. May also regulate potassium ion transport by phosphorylation of potassium channel subunits. Phosphorylates SRC; this increases SRC kinase activity. Phosphorylates ASAP1, NPHP1, KCNA2 and SHC1. Promotes phosphorylation of ASAP2, RHOU and PXN; this requires both SRC and PTK2/PYK2. The chain is Protein-tyrosine kinase 2-beta (Ptk2b) from Rattus norvegicus (Rat).